The sequence spans 119 residues: Hemerythrin subunit A (119 aa).

Positions 26, 55, 59, 74, 78, 107, and 112 each coordinate Fe cation.

Belongs to the hemerythrin family.

Hemerythrin is a respiratory protein in blood cells of certain marine worms. The oxygen-binding site in each chain contains two iron atoms. In Sipunculus nudus (Sipunculan worm), this protein is Hemerythrin subunit A.